A 250-amino-acid chain; its full sequence is uncharacterized protein (250 aa).

The signal sequence occupies residues 1–24; it reads MKGFLKPNFSLGALFLTLSPIATA. Cys25 carries N-palmitoyl cysteine lipidation. A lipid anchor (S-diacylglycerol cysteine) is attached at Cys25. The 157-residue stretch at 44–200 folds into the TNase-like domain; it reads RLRKARVNHW…FNNRKNIFSY (157 aa).

The protein resides in the cell membrane. This is an uncharacterized protein from Mycoplasma genitalium (strain ATCC 33530 / DSM 19775 / NCTC 10195 / G37) (Mycoplasmoides genitalium).